A 756-amino-acid chain; its full sequence is 5-methyltetrahydropteroyltriglutamate--homocysteine methyltransferase (756 aa).

5-methyltetrahydropteroyltri-L-glutamate is bound by residues 15–18 (REWK) and lysine 111. A disordered region spans residues 392 to 411 (GAATSHNLENKKRPQSFNER). Over residues 399-411 (LENKKRPQSFNER) the composition is skewed to basic and acidic residues. L-homocysteine contacts are provided by residues 429-431 (IGS) and glutamate 482. L-methionine-binding positions include 429-431 (IGS) and glutamate 482. 5-methyltetrahydropteroyltri-L-glutamate-binding positions include 513–514 (RC) and tryptophan 559. L-homocysteine is bound at residue aspartate 597. An L-methionine-binding site is contributed by aspartate 597. Glutamate 603 is a binding site for 5-methyltetrahydropteroyltri-L-glutamate. Zn(2+)-binding residues include histidine 639, cysteine 641, and glutamate 663. Histidine 692 (proton donor) is an active-site residue. Residue cysteine 724 participates in Zn(2+) binding.

The protein belongs to the vitamin-B12 independent methionine synthase family. Requires Zn(2+) as cofactor.

The enzyme catalyses 5-methyltetrahydropteroyltri-L-glutamate + L-homocysteine = tetrahydropteroyltri-L-glutamate + L-methionine. It participates in amino-acid biosynthesis; L-methionine biosynthesis via de novo pathway; L-methionine from L-homocysteine (MetE route): step 1/1. Its function is as follows. Catalyzes the transfer of a methyl group from 5-methyltetrahydrofolate to homocysteine resulting in methionine formation. In Halalkalibacterium halodurans (strain ATCC BAA-125 / DSM 18197 / FERM 7344 / JCM 9153 / C-125) (Bacillus halodurans), this protein is 5-methyltetrahydropteroyltriglutamate--homocysteine methyltransferase.